Consider the following 960-residue polypeptide: Probable glutamyl endopeptidase, chloroplastic (960 aa).

The transit peptide at 1-62 (MMRFHKACHR…FSENPLTTVM (62 aa)) directs the protein to the chloroplast. The interval 78 to 98 (SGGAEDGGGTSNGSLSASATA) is disordered. Residues 89–98 (NGSLSASATA) are compositionally biased toward polar residues. Active-site charge relay system residues include Ser780, Asp854, and His888. The segment at 915–960 (TSDADTSPDQSKEGSDSADKVSTGTGGGNPEFGEHEVHSKLRRSLL) is disordered. Basic and acidic residues predominate over residues 924–933 (QSKEGSDSAD).

This sequence belongs to the peptidase S9D family.

It is found in the plastid. It localises to the chloroplast stroma. In terms of biological role, serine-type protease active in vitro against the LHCII N-terminal. Cleaves its substrate on the carboxy-side of Glu residues. The protein is Probable glutamyl endopeptidase, chloroplastic (GEP) of Arabidopsis thaliana (Mouse-ear cress).